A 643-amino-acid polypeptide reads, in one-letter code: Lysophospholipase ARB_05919 (643 aa).

Positions 1 to 22 are cleaved as a signal peptide; that stretch reads MMFIPATLGTFVLASLLPATVG. A PLA2c domain is found at 50 to 597; it reads DCPSTKPAVR…KMYCWDGTLN (548 aa). N-linked (GlcNAc...) asparagine glycans are attached at residues Asn142, Asn176, Asn195, Asn293, Asn466, Asn472, Asn482, Asn503, Asn524, Asn533, Asn552, and Asn597.

It belongs to the lysophospholipase family.

Its subcellular location is the secreted. The catalysed reaction is a 1-acyl-sn-glycero-3-phosphocholine + H2O = sn-glycerol 3-phosphocholine + a fatty acid + H(+). In terms of biological role, catalyzes the release of fatty acids from lysophospholipids. Phospholipase B may well contribute to pathogenicity by abetting the fungus in damaging host cell membranes. This chain is Lysophospholipase ARB_05919, found in Arthroderma benhamiae (strain ATCC MYA-4681 / CBS 112371) (Trichophyton mentagrophytes).